Here is a 240-residue protein sequence, read N- to C-terminus: Mannosyl-D-glycerate transport/metabolism system repressor MngR (240 aa).

Residues 4 to 72 enclose the HTH gntR-type domain; it reads KPLYRQIADR…QGSGTYVKEE (69 aa). A DNA-binding region (H-T-H motif) is located at residues 32–51; it reads ESALQTEFGVSRVTVRQALR.

Its function is as follows. Represses mngA and mngB. Regulates its own expression. The polypeptide is Mannosyl-D-glycerate transport/metabolism system repressor MngR (mngR) (Escherichia coli (strain K12)).